A 154-amino-acid polypeptide reads, in one-letter code: Transcriptional repressor NrdR (154 aa).

A zinc finger lies at 3–34; sequence CPYCRHPDSRVVDSREADDGQLIRRRRSCPEC. Residues 46 to 136 form the ATP-cone domain; that stretch reads LAVVKRSGVT…VYRSFESLAD (91 aa).

Belongs to the NrdR family. It depends on Zn(2+) as a cofactor.

Its function is as follows. Negatively regulates transcription of bacterial ribonucleotide reductase nrd genes and operons by binding to NrdR-boxes. This chain is Transcriptional repressor NrdR, found in Salinispora tropica (strain ATCC BAA-916 / DSM 44818 / JCM 13857 / NBRC 105044 / CNB-440).